The sequence spans 269 residues: MISLSDLRKFKAEGRKFSCLTCYDASMAKAMELAEIDTILIGDSLGMAIQGRDSTLPVTVEDMAYHTAAVRRGNQHALIMTDLPFMSYATLNDALQNAKTVMQAGAQMIKIEGGAWLSETVQVLTRNGVPVCVHLGLTPQSVHVFGGYKLQARTREAADQLIADCTAVVEAGAAVLLLECVPAQLGQEIAELFPNTPVIGIGAGNATDGQVLVVQDMLGLTFGRVARFVRNFMKEQSGETAILDAFKAFHAAVQDQSFPAKEHTFQVEL.

Positions 43 and 82 each coordinate Mg(2+). 3-methyl-2-oxobutanoate contacts are provided by residues 43–44 (DS), Asp-82, and Lys-110. Glu-112 provides a ligand contact to Mg(2+). Glu-179 serves as the catalytic Proton acceptor.

This sequence belongs to the PanB family. In terms of assembly, homodecamer; pentamer of dimers. It depends on Mg(2+) as a cofactor.

The protein resides in the cytoplasm. The enzyme catalyses 3-methyl-2-oxobutanoate + (6R)-5,10-methylene-5,6,7,8-tetrahydrofolate + H2O = 2-dehydropantoate + (6S)-5,6,7,8-tetrahydrofolate. Its pathway is cofactor biosynthesis; (R)-pantothenate biosynthesis; (R)-pantoate from 3-methyl-2-oxobutanoate: step 1/2. Catalyzes the reversible reaction in which hydroxymethyl group from 5,10-methylenetetrahydrofolate is transferred onto alpha-ketoisovalerate to form ketopantoate. The sequence is that of 3-methyl-2-oxobutanoate hydroxymethyltransferase from Acinetobacter baumannii (strain AB307-0294).